The chain runs to 263 residues: Acidic leucine-rich nuclear phosphoprotein 32 family member E (263 aa).

3 LRR repeats span residues glutamate 43 to proline 64, lysine 65 to threonine 84, and asparagine 89 to alanine 110. In terms of domain architecture, LRRCT spans cysteine 123 to aspartate 161. Residues aspartate 146 to aspartate 263 are disordered. Acidic residues-rich tracts occupy residues phenylalanine 148–glutamate 172, alanine 180–valine 203, and arginine 214–alanine 242. A ZID domain region spans residues glutamate 202–aspartate 263.

Belongs to the ANP32 family. In terms of assembly, component of a SWR1-like complex. Interacts with H2A.Z/H2AZ1. Phosphorylated. The phosphorylation is nuclear localization signal (NLS)-dependent.

It localises to the cytoplasm. It is found in the nucleus. Functionally, histone chaperone that specifically mediates the genome-wide removal of histone H2A.Z/H2AZ1 from the nucleosome: removes H2A.Z/H2AZ1 from its normal sites of deposition, especially from enhancer and insulator regions. Not involved in deposition of H2A.Z/H2AZ1 in the nucleosome. May stabilize the evicted H2A.Z/H2AZ1-H2B dimer, thus shifting the equilibrium towards dissociation and the off-chromatin state. Inhibits activity of protein phosphatase 2A (PP2A). Does not inhibit protein phosphatase 1. May play a role in cerebellar development and synaptogenesis. This chain is Acidic leucine-rich nuclear phosphoprotein 32 family member E (anp32e), found in Xenopus laevis (African clawed frog).